The primary structure comprises 591 residues: Aspartate--tRNA(Asp/Asn) ligase (591 aa).

Glu-175 contacts L-aspartate. The segment at Gln-199 to Lys-202 is aspartate. L-aspartate-binding residues include Arg-221 and His-453. Arg-221 to Glu-223 contributes to the ATP binding site. Residue Glu-486 participates in ATP binding. Residue Arg-493 participates in L-aspartate binding. Position 538–541 (Gly-538–Arg-541) interacts with ATP.

Belongs to the class-II aminoacyl-tRNA synthetase family. Type 1 subfamily. Homodimer.

Its subcellular location is the cytoplasm. The catalysed reaction is tRNA(Asx) + L-aspartate + ATP = L-aspartyl-tRNA(Asx) + AMP + diphosphate. Functionally, aspartyl-tRNA synthetase with relaxed tRNA specificity since it is able to aspartylate not only its cognate tRNA(Asp) but also tRNA(Asn). Reaction proceeds in two steps: L-aspartate is first activated by ATP to form Asp-AMP and then transferred to the acceptor end of tRNA(Asp/Asn). The polypeptide is Aspartate--tRNA(Asp/Asn) ligase (Cereibacter sphaeroides (strain ATCC 17025 / ATH 2.4.3) (Rhodobacter sphaeroides)).